The sequence spans 334 residues: Hematopoietic SH2 domain-containing protein (334 aa).

Residues 34–125 (WFHGTISREA…PFGELLTQAC (92 aa)) form the SH2 domain. Disordered stretches follow at residues 157–181 (EVQR…KGEF) and 254–280 (EDSC…ATFR). Positions 258-267 (AATTSLQNPA) are enriched in polar residues.

In terms of assembly, interacts with FES and TNK2. May be phosphorylated by FES and ACK1. In terms of tissue distribution, predominantly expressed in spleen and thymus. Appears not to be expressed in heart, brain, liver, kidney, embryo, lung and ovary.

The protein localises to the cytoplasm. It is found in the mitochondrion. In terms of biological role, adapter protein involved in tyrosine kinase and CD28 signaling. May be a modulator of the apoptotic response through its ability to affect mitochondrial stability. The sequence is that of Hematopoietic SH2 domain-containing protein (Hsh2d) from Mus musculus (Mouse).